Consider the following 146-residue polypeptide: Leghemoglobin 1 (146 aa).

In terms of domain architecture, Globin spans 2–146 (GFTEKQEALV…LAAAIKKAMG (145 aa)). Tyr29 carries the post-translational modification Nitrated tyrosine. Position 44 (Ser44) interacts with heme b. The residue at position 44 (Ser44) is a Phosphoserine. His61 contacts O2. Residues Lys64, His93, and Lys96 each coordinate heme b. Tyr134 is subject to Nitrated tyrosine.

This sequence belongs to the plant globin family. In terms of assembly, monomer. Post-translationally, nitrated in effective nodules and particularly in hypoxic conditions; this mechanism may play a protective role in the symbiosis by buffering toxic peroxynitrite NO(2)(-). Nitration level decrease during nodule senescence. Phosphorylation at Ser-44 disrupts the molecular environment of its porphyrin ring oxygen binding pocket, thus leading to a reduced oxygen consumption and to the delivery of oxygen O(2) to symbiosomes. Root nodules.

The protein localises to the cytoplasm. Its subcellular location is the cytosol. It is found in the nucleus. Functionally, leghemoglobin that reversibly binds oxygen O(2) through a pentacoordinated heme iron. In root nodules, facilitates the diffusion of oxygen to the bacteroids while preventing the bacterial nitrogenase from being inactivated by buffering dioxygen, nitric oxide and carbon monoxide, and promoting the formation of reactive oxygen species (ROS, e.g. H(2)O(2)). This role is essential for symbiotic nitrogen fixation (SNF). This is Leghemoglobin 1 from Medicago truncatula (Barrel medic).